The chain runs to 485 residues: Retron Mx162 reverse transcriptase (485 aa).

The interval 1 to 33 is disordered; the sequence is MTARLDPFVPAASPQAVPTPELTAPSSDAAAKR. The 241-residue stretch at 167–407 folds into the Reverse transcriptase domain; the sequence is RWFAFHREVD…TRQRVTGLVV (241 aa). Residues Asp250, Asp346, and Asp347 each contribute to the Mg(2+) site.

Belongs to the bacterial reverse transcriptase family.

It catalyses the reaction DNA(n) + a 2'-deoxyribonucleoside 5'-triphosphate = DNA(n+1) + diphosphate. Its activity is regulated as follows. msDNA synthesis is inhibited by rifampicin and chloramphenicol. Its function is as follows. Reverse transcriptase (RT) responsible for synthesis of msDNA-Mx162 (a branched molecule with RNA linked by a 2',5'-phosphodiester bond to ssDNA). The retron transcript serves as primer (from a conserved internal G residue) and template for the reaction, and codes for the RT. The retron is involved in antiviral defense. The sequence is that of Retron Mx162 reverse transcriptase from Myxococcus xanthus.